The chain runs to 324 residues: Glutathione synthetase (324 aa).

One can recognise an ATP-grasp domain in the interval 129–313; the sequence is KLYALHFPDL…LEDEIVDWLV (185 aa). 155-211 is a binding site for ATP; that stretch reads VDIHGRAVIKPLDGKGGEGIFLLARADRNLNAIIEASTAYGTRHVMVQRYLEESRQG. Residues glutamate 284 and asparagine 286 each coordinate Mg(2+).

Belongs to the prokaryotic GSH synthase family. Mg(2+) is required as a cofactor. Requires Mn(2+) as cofactor.

It carries out the reaction gamma-L-glutamyl-L-cysteine + glycine + ATP = glutathione + ADP + phosphate + H(+). It functions in the pathway sulfur metabolism; glutathione biosynthesis; glutathione from L-cysteine and L-glutamate: step 2/2. This is Glutathione synthetase from Gloeobacter violaceus (strain ATCC 29082 / PCC 7421).